The chain runs to 610 residues: V-type proton ATPase catalytic subunit A (610 aa).

245–252 (GAFGCGKT) lines the ATP pocket.

This sequence belongs to the ATPase alpha/beta chains family. V-ATPase is a heteromultimeric enzyme composed of a peripheral catalytic V1 complex (main components: subunits A, B, C, D, E, and F) attached to an integral membrane V0 proton pore complex (main component: the proteolipid protein).

It catalyses the reaction ATP + H2O + 4 H(+)(in) = ADP + phosphate + 5 H(+)(out). Catalytic subunit of the peripheral V1 complex of vacuolar ATPase. V-ATPase vacuolar ATPase is responsible for acidifying a variety of intracellular compartments in eukaryotic cells. The polypeptide is V-type proton ATPase catalytic subunit A (Trypanosoma congolense).